A 59-amino-acid chain; its full sequence is Putative potassium channel toxin Ts22 (59 aa).

The signal sequence occupies residues 1 to 22 (MKAFYGILIIFILISMIDLSQQ). Intrachain disulfides connect Cys29–Cys50, Cys35–Cys55, and Cys39–Cys57.

It belongs to the short scorpion toxin superfamily. Potassium channel inhibitor family. Alpha-KTx 04 subfamily. As to expression, expressed by the venom gland.

It is found in the secreted. In terms of biological role, potently blocks voltage-gated potassium channels (Kv). This Tityus serrulatus (Brazilian scorpion) protein is Putative potassium channel toxin Ts22.